A 441-amino-acid chain; its full sequence is C-terminal-binding protein 1 (441 aa).

The tract at residues 1–70 (MGSSHLLNKG…EIHEKVLNEA (70 aa)) is interaction with GLIS2 1. NAD(+) contacts are provided by residues Ser-100, 180 to 185 (IGLGRV), Asp-204, 237 to 243 (CGLNEHN), 264 to 266 (TAR), and Asp-290. The active site involves Arg-266. The tract at residues 288-360 (ALDVHESEPF…VNKDHLTAAT (73 aa)) is interaction with GLIS2 2. Residue Glu-295 is part of the active site. The residue at position 300 (Ser-300) is a Phosphoserine. His-315 serves as the catalytic Proton donor. NAD(+) is bound at residue 315–318 (HAAW). Residues 409–441 (SHGLPPVAHPPHAPSPGQTVKPEADRDHTSDQL) form a disordered region. Phosphoserine is present on Ser-423. A Glycyl lysine isopeptide (Lys-Gly) (interchain with G-Cter in SUMO) cross-link involves residue Lys-429. Residues 430 to 441 (PEADRDHTSDQL) are compositionally biased toward basic and acidic residues.

This sequence belongs to the D-isomer specific 2-hydroxyacid dehydrogenase family. In terms of assembly, homo- or heterodimer. Heterodimer with CTBP2. Interacts with ELK3 (via its PXDLS motif). Interacts with RBBP8 (via its PXDLS motif). Interacts with PNN, MECOM and ZFHX1B. Interacts with ZNF366 (via PXDLS motif). Interaction with SATB1 (non-acetylated form); the interaction stabilizes its attachment to DNA and promotes transcription repression. Interacts with PRDM16; the interaction represses white adipose tissue (WAT)-specific genes expression. Interacts with GLIS2, HIPK2, FOXP1, FOXP2, HDAC4, HDAC5, HDAC9, NRIP1, WIZ and ZNF217. Interacts with BCL6; the interaction is required for BCL6 transcriptional autoinhibition and inhibition of some BCL6 target genes. Interacts with IKZF4. Interacts with MCRIP1 (unphosphorylated form, via the PXDLS motif); competitively inhibiting CTBP-ZEB1 interaction. Interacts with Bassoon/BSN; this interaction targets and anchors CTBP1 to presynapses. Interacts with SIMC1. NAD(+) serves as cofactor. Post-translationally, ADP-ribosylated; when cells are exposed to brefeldin A. In terms of processing, the level of phosphorylation appears to be regulated during the cell cycle. Phosphorylation by HIPK2 on Ser-423 induces proteasomal degradation. Sumoylation on Lys-429 is promoted by the E3 SUMO-protein ligase CBX4. In terms of tissue distribution, expressed in a wide range of adult tissues.

The protein localises to the cytoplasm. It localises to the nucleus. In terms of biological role, corepressor targeting diverse transcription regulators such as GLIS2 or BCL6. Has dehydrogenase activity. Involved in controlling the equilibrium between tubular and stacked structures in the Golgi complex. Functions in brown adipose tissue (BAT) differentiation. The sequence is that of C-terminal-binding protein 1 (Ctbp1) from Mus musculus (Mouse).